A 502-amino-acid chain; its full sequence is Probable malate:quinone oxidoreductase (502 aa).

The protein belongs to the MQO family. The cofactor is FAD.

The enzyme catalyses (S)-malate + a quinone = a quinol + oxaloacetate. Its pathway is carbohydrate metabolism; tricarboxylic acid cycle; oxaloacetate from (S)-malate (quinone route): step 1/1. This chain is Probable malate:quinone oxidoreductase, found in Oceanobacillus iheyensis (strain DSM 14371 / CIP 107618 / JCM 11309 / KCTC 3954 / HTE831).